The following is a 198-amino-acid chain: CASP-like protein 4B3 (198 aa).

Residues methionine 1–alanine 27 are disordered. The Cytoplasmic segment spans residues methionine 1 to arginine 51. The span at serine 16–alanine 27 shows a compositional bias: low complexity. Residues leucine 52–asparagine 72 form a helical membrane-spanning segment. At lysine 73–tyrosine 85 the chain is on the extracellular side. The chain crosses the membrane as a helical span at residues proline 86–valine 106. Over threonine 107–lysine 124 the chain is Cytoplasmic. The helical transmembrane segment at alanine 125–leucine 145 threads the bilayer. Over serine 146–serine 166 the chain is Extracellular. A helical membrane pass occupies residues alanine 167–valine 187. At serine 188–valine 198 the chain is on the cytoplasmic side.

The protein belongs to the Casparian strip membrane proteins (CASP) family. Homodimer and heterodimers.

It localises to the cell membrane. This Oryza sativa subsp. japonica (Rice) protein is CASP-like protein 4B3.